The sequence spans 170 residues: NADH-quinone oxidoreductase subunit B (170 aa).

[4Fe-4S] cluster-binding residues include Cys-37, Cys-38, Cys-102, and Cys-131.

This sequence belongs to the complex I 20 kDa subunit family. In terms of assembly, NDH-1 is composed of 14 different subunits. Subunits NuoB, C, D, E, F, and G constitute the peripheral sector of the complex. It depends on [4Fe-4S] cluster as a cofactor.

The protein localises to the cell inner membrane. The enzyme catalyses a quinone + NADH + 5 H(+)(in) = a quinol + NAD(+) + 4 H(+)(out). Its function is as follows. NDH-1 shuttles electrons from NADH, via FMN and iron-sulfur (Fe-S) centers, to quinones in the respiratory chain. The immediate electron acceptor for the enzyme in this species is believed to be ubiquinone. Couples the redox reaction to proton translocation (for every two electrons transferred, four hydrogen ions are translocated across the cytoplasmic membrane), and thus conserves the redox energy in a proton gradient. The polypeptide is NADH-quinone oxidoreductase subunit B (Citrifermentans bemidjiense (strain ATCC BAA-1014 / DSM 16622 / JCM 12645 / Bem) (Geobacter bemidjiensis)).